A 68-amino-acid polypeptide reads, in one-letter code: MSQEAIIRSWKDPFSRENSTQNPAGNPFSELKEAQMDKLVGAGDMEAACTFTLPGGGGVCTLTSECIC.

The interval 1–28 (MSQEAIIRSWKDPFSRENSTQNPAGNPF) is disordered. The propeptide occupies 1-48 (MSQEAIIRSWKDPFSRENSTQNPAGNPFSELKEAQMDKLVGAGDMEAA). Positions 49–50 (CT) form a cross-link, beta-methyllanthionine (Cys-Thr). 2 consecutive cross-links (beta-methyllanthionine (Thr-Cys)) follow at residues 52 to 60 (TLPGGGGVC) and 61 to 66 (TLTSEC). The S-(2-aminovinyl)-3-methyl-D-cysteine (Thr-Cys) cross-link spans 63–68 (TSECIC). Residue S64 is modified to 2,3-didehydroalanine (Ser).

The protein belongs to the type B lantibiotic family. In terms of processing, maturation of lantibiotics involves the enzymatic conversion of Thr, and Ser into dehydrated AA and the formation of thioether bonds with cysteine. The carboxy-terminal beta-methyllanthionine undergoes decarboxylation. This is followed by membrane translocation and cleavage of the modified precursor.

Functionally, kills a number of Gram-positive bacteria. Acts at the level of cell wall biosynthesis by interfering with bacterial peptidoglycan biosynthesis. Specifically inhibits the conversion of the lipid II intermediate into polymeric nascent glycan strands by transglycosylation. May interact with the peptidoglycan precursor rather than with the enzyme. The chain is Lantibiotic mersacidin (mrsA) from Bacillus sp. (strain HIL-Y85/54728).